Consider the following 343-residue polypeptide: Holliday junction branch migration complex subunit RuvB (343 aa).

The tract at residues 1 to 20 (MEEMASRMISGDPELGEPFQ) is disordered. The segment at 1-185 (MEEMASRMIS…FGILARMQFY (185 aa)) is large ATPase domain (RuvB-L). ATP contacts are provided by residues Leu24, Arg25, Gly66, Lys69, Thr70, Thr71, 132-134 (EDF), Arg175, Tyr185, and Arg222. Thr70 is a binding site for Mg(2+). The tract at residues 186 to 256 (EPDELQQIVT…LADRALLALE (71 aa)) is small ATPAse domain (RuvB-S). Residues 259 to 343 (RNGLDNMDHR…PRPVQQGTLL (85 aa)) are head domain (RuvB-H). Residues Arg295, Arg314, and Arg319 each contribute to the DNA site.

The protein belongs to the RuvB family. In terms of assembly, homohexamer. Forms an RuvA(8)-RuvB(12)-Holliday junction (HJ) complex. HJ DNA is sandwiched between 2 RuvA tetramers; dsDNA enters through RuvA and exits via RuvB. An RuvB hexamer assembles on each DNA strand where it exits the tetramer. Each RuvB hexamer is contacted by two RuvA subunits (via domain III) on 2 adjacent RuvB subunits; this complex drives branch migration. In the full resolvosome a probable DNA-RuvA(4)-RuvB(12)-RuvC(2) complex forms which resolves the HJ.

Its subcellular location is the cytoplasm. It catalyses the reaction ATP + H2O = ADP + phosphate + H(+). Functionally, the RuvA-RuvB-RuvC complex processes Holliday junction (HJ) DNA during genetic recombination and DNA repair, while the RuvA-RuvB complex plays an important role in the rescue of blocked DNA replication forks via replication fork reversal (RFR). RuvA specifically binds to HJ cruciform DNA, conferring on it an open structure. The RuvB hexamer acts as an ATP-dependent pump, pulling dsDNA into and through the RuvAB complex. RuvB forms 2 homohexamers on either side of HJ DNA bound by 1 or 2 RuvA tetramers; 4 subunits per hexamer contact DNA at a time. Coordinated motions by a converter formed by DNA-disengaged RuvB subunits stimulates ATP hydrolysis and nucleotide exchange. Immobilization of the converter enables RuvB to convert the ATP-contained energy into a lever motion, pulling 2 nucleotides of DNA out of the RuvA tetramer per ATP hydrolyzed, thus driving DNA branch migration. The RuvB motors rotate together with the DNA substrate, which together with the progressing nucleotide cycle form the mechanistic basis for DNA recombination by continuous HJ branch migration. Branch migration allows RuvC to scan DNA until it finds its consensus sequence, where it cleaves and resolves cruciform DNA. The sequence is that of Holliday junction branch migration complex subunit RuvB from Magnetococcus marinus (strain ATCC BAA-1437 / JCM 17883 / MC-1).